We begin with the raw amino-acid sequence, 264 residues long: S-adenosylmethionine decarboxylase proenzyme (264 aa).

The Schiff-base intermediate with substrate; via pyruvic acid role is filled by Ser112. Position 112 is a pyruvic acid (Ser); by autocatalysis (Ser112). His117 acts as the Proton acceptor; for processing activity in catalysis. Cys140 serves as the catalytic Proton donor; for catalytic activity.

It belongs to the prokaryotic AdoMetDC family. Type 2 subfamily. Heterooctamer of four alpha and four beta chains arranged as a tetramer of alpha/beta heterodimers. The cofactor is pyruvate. Post-translationally, is synthesized initially as an inactive proenzyme. Formation of the active enzyme involves a self-maturation process in which the active site pyruvoyl group is generated from an internal serine residue via an autocatalytic post-translational modification. Two non-identical subunits are generated from the proenzyme in this reaction, and the pyruvate is formed at the N-terminus of the alpha chain, which is derived from the carboxyl end of the proenzyme. The post-translation cleavage follows an unusual pathway, termed non-hydrolytic serinolysis, in which the side chain hydroxyl group of the serine supplies its oxygen atom to form the C-terminus of the beta chain, while the remainder of the serine residue undergoes an oxidative deamination to produce ammonia and the pyruvoyl group blocking the N-terminus of the alpha chain.

The enzyme catalyses S-adenosyl-L-methionine + H(+) = S-adenosyl 3-(methylsulfanyl)propylamine + CO2. Its pathway is amine and polyamine biosynthesis; S-adenosylmethioninamine biosynthesis; S-adenosylmethioninamine from S-adenosyl-L-methionine: step 1/1. In terms of biological role, catalyzes the decarboxylation of S-adenosylmethionine to S-adenosylmethioninamine (dcAdoMet), the propylamine donor required for the synthesis of the polyamines spermine and spermidine from the diamine putrescine. The chain is S-adenosylmethionine decarboxylase proenzyme from Shigella boydii serotype 4 (strain Sb227).